The chain runs to 154 residues: S-ribosylhomocysteine lyase (154 aa).

Residues His-58, His-62, and Cys-125 each coordinate Fe cation.

Belongs to the LuxS family. Homodimer. Requires Fe cation as cofactor.

The catalysed reaction is S-(5-deoxy-D-ribos-5-yl)-L-homocysteine = (S)-4,5-dihydroxypentane-2,3-dione + L-homocysteine. Its function is as follows. Involved in the synthesis of autoinducer 2 (AI-2) which is secreted by bacteria and is used to communicate both the cell density and the metabolic potential of the environment. The regulation of gene expression in response to changes in cell density is called quorum sensing. Catalyzes the transformation of S-ribosylhomocysteine (RHC) to homocysteine (HC) and 4,5-dihydroxy-2,3-pentadione (DPD). This Dichelobacter nodosus (strain VCS1703A) protein is S-ribosylhomocysteine lyase.